A 426-amino-acid polypeptide reads, in one-letter code: Probable auxin efflux carrier component 9 (426 aa).

Over methionine 1–glutamate 6 the chain is Extracellular. The chain crosses the membrane as a helical span at residues valine 7 to serine 27. Residues valine 28–glutamine 38 lie on the Cytoplasmic side of the membrane. Residues cysteine 39–valine 59 traverse the membrane as a helical segment. (indol-3-yl)acetate is bound at residue valine 51. Over serine 60 to arginine 70 the chain is Extracellular. The chain crosses the membrane as a helical span at residues leucine 71–leucine 91. At tryptophan 92–tryptophan 114 the chain is on the cytoplasmic side. The helical transmembrane segment at valine 115–leucine 135 threads the bilayer. (indol-3-yl)acetate-binding residues include asparagine 126 and isoleucine 128. Topologically, residues asparagine 136 to aspartate 145 are extracellular. A helical transmembrane segment spans residues leucine 146–tyrosine 166. Tyrosine 159 serves as a coordination point for (indol-3-yl)acetate. The Cytoplasmic portion of the chain corresponds to glutamate 167–serine 286. The interval arginine 232–glutamate 258 is disordered. The helical transmembrane segment at phenylalanine 287 to valine 307 threads the bilayer. Residues glutamate 308 to serine 310 lie on the Extracellular side of the membrane. The chain crosses the membrane as a helical span at residues leucine 311–alanine 331. At arginine 332–serine 347 the chain is on the cytoplasmic side. Residues methionine 348–methionine 368 form a helical membrane-spanning segment. The Extracellular portion of the chain corresponds to histidine 369–threonine 371. Residues leucine 372 to alanine 392 form a helical membrane-spanning segment. Position 386 (valine 386) interacts with (indol-3-yl)acetate. The Cytoplasmic segment spans residues glutamate 393 to glycine 405. Residues valine 406–leucine 426 form a helical membrane-spanning segment.

Belongs to the auxin efflux carrier (TC 2.A.69.1) family. In terms of assembly, homodimer. Expressed in roots, leaves and shoot apex. Expressed in roots, stem bases, stems, leaves and young panicles.

The protein localises to the membrane. May act as a component of the auxin efflux carrier. In Oryza sativa subsp. japonica (Rice), this protein is Probable auxin efflux carrier component 9.